A 489-amino-acid chain; its full sequence is Rhamnulokinase (489 aa).

Residue 13-17 coordinates ATP; it reads ASSGR. C68 and C222 form a disulfide bridge. Residues G83 and 236–238 contribute to the substrate site; that span reads HDT. The Proton acceptor role is filled by D237. An ATP-binding site is contributed by T259. N296 contributes to the substrate binding site. An ATP-binding site is contributed by Q304. C353 and C370 form a disulfide bridge. G402 lines the ATP pocket. A disulfide bond links C413 and C417.

It belongs to the rhamnulokinase family. Monomer. Mg(2+) serves as cofactor.

The catalysed reaction is L-rhamnulose + ATP = L-rhamnulose 1-phosphate + ADP + H(+). It functions in the pathway carbohydrate degradation; L-rhamnose degradation; glycerone phosphate from L-rhamnose: step 2/3. Its function is as follows. Involved in the catabolism of L-rhamnose (6-deoxy-L-mannose). Catalyzes the transfer of the gamma-phosphate group from ATP to the 1-hydroxyl group of L-rhamnulose to yield L-rhamnulose 1-phosphate. This is Rhamnulokinase from Escherichia coli O157:H7.